The primary structure comprises 85 residues: Small ribosomal subunit protein uS17 (85 aa).

It belongs to the universal ribosomal protein uS17 family. In terms of assembly, part of the 30S ribosomal subunit.

In terms of biological role, one of the primary rRNA binding proteins, it binds specifically to the 5'-end of 16S ribosomal RNA. This Spiroplasma citri protein is Small ribosomal subunit protein uS17.